Here is a 518-residue protein sequence, read N- to C-terminus: Chromosomal replication initiator protein DnaA (518 aa).

The tract at residues Met-1 to Pro-76 is domain I, interacts with DnaA modulators. Residues Pro-76–Ser-176 form a domain II region. The interval Leu-91–Glu-174 is disordered. Residues Asp-124–Ser-135 are compositionally biased toward basic and acidic residues. Positions Leu-136–Pro-147 are enriched in acidic residues. Positions Arg-177–Ala-393 are domain III, AAA+ region. Residues Gly-221, Gly-223, Lys-224, and Thr-225 each coordinate ATP. The segment at Ser-394 to Ala-518 is domain IV, binds dsDNA.

Belongs to the DnaA family. In terms of assembly, oligomerizes as a right-handed, spiral filament on DNA at oriC.

It localises to the cytoplasm. Its function is as follows. Plays an essential role in the initiation and regulation of chromosomal replication. ATP-DnaA binds to the origin of replication (oriC) to initiate formation of the DNA replication initiation complex once per cell cycle. Binds the DnaA box (a 9 base pair repeat at the origin) and separates the double-stranded (ds)DNA. Forms a right-handed helical filament on oriC DNA; dsDNA binds to the exterior of the filament while single-stranded (ss)DNA is stabiized in the filament's interior. The ATP-DnaA-oriC complex binds and stabilizes one strand of the AT-rich DNA unwinding element (DUE), permitting loading of DNA polymerase. After initiation quickly degrades to an ADP-DnaA complex that is not apt for DNA replication. Binds acidic phospholipids. This chain is Chromosomal replication initiator protein DnaA, found in Kineococcus radiotolerans (strain ATCC BAA-149 / DSM 14245 / SRS30216).